Here is a 142-residue protein sequence, read N- to C-terminus: Putative transmembrane protein INAFM1 (142 aa).

A compositionally biased stretch (gly residues) spans M1–L19. The disordered stretch occupies residues M1–G22. Residues Y36–V56 form a helical membrane-spanning segment. 2 disordered regions span residues P61 to P83 and V99 to G142. Pro residues predominate over residues P64 to P83. Low complexity predominate over residues V99 to L111. Over residues Y117–G142 the composition is skewed to basic and acidic residues.

The protein resides in the membrane. The sequence is that of Putative transmembrane protein INAFM1 from Homo sapiens (Human).